Here is a 338-residue protein sequence, read N- to C-terminus: uncharacterized protein (338 aa).

The region spanning 111–334 (HLGEERVLVP…LELAEKYNLD (224 aa)) is the Radical SAM core domain. [4Fe-4S] cluster is bound by residues cysteine 129, cysteine 133, and cysteine 136.

[4Fe-4S] cluster is required as a cofactor.

This is an uncharacterized protein from Methanocaldococcus jannaschii (strain ATCC 43067 / DSM 2661 / JAL-1 / JCM 10045 / NBRC 100440) (Methanococcus jannaschii).